A 386-amino-acid chain; its full sequence is Beta-citrylglutamate synthase B (386 aa).

Residues phenylalanine 119–alanine 304 enclose the ATP-grasp domain. ATP contacts are provided by residues lysine 158, glutamine 193 to aspartate 203, and arginine 219. 3 residues coordinate Mg(2+): aspartate 264, glutamate 277, and asparagine 279. 3 residues coordinate Mn(2+): aspartate 264, glutamate 277, and asparagine 279. Positions alanine 325–glutamate 359 are disordered. Over residues serine 338–aspartate 352 the composition is skewed to low complexity.

It belongs to the RimK family. Mg(2+) serves as cofactor. Requires Mn(2+) as cofactor.

It localises to the cytoplasm. It catalyses the reaction citrate + L-glutamate + ATP = beta-citrylglutamate + ADP + phosphate + H(+). The enzyme catalyses N-acetyl-L-aspartate + L-glutamate + ATP = N-acetyl-L-aspartyl-L-glutamate + ADP + phosphate + H(+). In terms of biological role, catalyzes the synthesis of beta-citryl-L-glutamate and N-acetyl-L-aspartyl-L-glutamate. Beta-citryl-L-glutamate is synthesized more efficiently than N-acetyl-L-aspartyl-L-glutamate. The chain is Beta-citrylglutamate synthase B (RIMKLB) from Homo sapiens (Human).